A 1423-amino-acid polypeptide reads, in one-letter code: DNA-directed RNA polymerase, mitochondrial (1423 aa).

The transit peptide at methionine 1–leucine 73 directs the protein to the mitochondrion. The interval asparagine 266–glutamine 303 is disordered. Low complexity predominate over residues glutamine 278–glutamine 297. Catalysis depends on residues aspartate 901 and lysine 970. Basic and acidic residues predominate over residues glutamate 1055–histidine 1064. The segment at glutamate 1055–lysine 1087 is disordered. The active site involves aspartate 1180. Residues valine 1316–histidine 1342 are disordered. Residues methionine 1322–glutamate 1336 show a composition bias toward acidic residues.

This sequence belongs to the phage and mitochondrial RNA polymerase family.

It localises to the mitochondrion. It carries out the reaction RNA(n) + a ribonucleoside 5'-triphosphate = RNA(n+1) + diphosphate. Its function is as follows. DNA-dependent RNA polymerase catalyzes the transcription of DNA into RNA using the four ribonucleoside triphosphates as substrates. The chain is DNA-directed RNA polymerase, mitochondrial (cyt-5) from Neurospora crassa (strain ATCC 24698 / 74-OR23-1A / CBS 708.71 / DSM 1257 / FGSC 987).